A 464-amino-acid chain; its full sequence is ATP synthase subunit beta 2 (464 aa).

147-154 lines the ATP pocket; the sequence is GGAGVGKT.

This sequence belongs to the ATPase alpha/beta chains family. As to quaternary structure, F-type ATPases have 2 components, CF(1) - the catalytic core - and CF(0) - the membrane proton channel. CF(1) has five subunits: alpha(3), beta(3), gamma(1), delta(1), epsilon(1). CF(0) has four main subunits: a(1), b(1), b'(1) and c(9-12).

The protein resides in the cell inner membrane. The enzyme catalyses ATP + H2O + 4 H(+)(in) = ADP + phosphate + 5 H(+)(out). Functionally, produces ATP from ADP in the presence of a proton gradient across the membrane. The catalytic sites are hosted primarily by the beta subunits. The polypeptide is ATP synthase subunit beta 2 (Cereibacter sphaeroides (strain ATCC 17029 / ATH 2.4.9) (Rhodobacter sphaeroides)).